A 391-amino-acid polypeptide reads, in one-letter code: Cold-shock protein CS120 (391 aa).

Repeat copies occupy residues 9 to 31, 49 to 62, 72 to 94, 95 to 108, 115 to 128, 135 to 148, 156 to 178, 179 to 192, 199 to 212, 220 to 242, 243 to 256, 263 to 276, 284 to 306, 307 to 320, 327 to 340, 350 to 363, and 374 to 391. Positions 9–391 are 6 X 23 AA approximate repeats; sequence GEKKGIMEKI…KIKDKLPGQH (383 aa). Positions 21 to 33 are enriched in basic and acidic residues; the sequence is KLPGGHGDHKETA. Positions 21-391 are disordered; it reads KLPGGHGDHK…KIKDKLPGQH (371 aa). Low complexity predominate over residues 34 to 59; it reads GTHGHPGTATHGAPATGGAYGQQGHA. Positions 49-363 are 11 X 14 AA approximate repeats; the sequence is TGGAYGQQGH…HGQHGHTGTT (315 aa). The segment covering 70–92 has biased composition (basic and acidic residues); sequence HAGEKKGVMENIKDKLPGGHQDH. The segment covering 93–145 has biased composition (low complexity); the sequence is QQTGGTYGQQGHTGTATHGTPATGGTYGQQGHTGTATHGTPATGGTYGEQGHT. Residues 155–176 show a composition bias toward basic and acidic residues; the sequence is TGEKKGVMENIKEKLPGGHGDH. The span at 177-196 shows a compositional bias: low complexity; that stretch reads QQTGGTYGQQGHTGTATHGT. Residues 219–240 are compositionally biased toward basic and acidic residues; that stretch reads TGEKKGVMENIKDKLPGGHGDH. Composition is skewed to low complexity over residues 241–260 and 272–282; these read QQTGGTYGQQGHTGTATQGT and HTGMTGAGTHS. Basic and acidic residues predominate over residues 283–304; the sequence is TGEKKGVMENIKEKLPGGHSDH. Composition is skewed to low complexity over residues 305–324 and 333–351; these read QQTGGAYGQQGHTGTATHGT and QHGHAGVIGTETHGTTATG. Residues 361 to 372 show a composition bias toward gly residues; the sequence is GTTGTGTHGSDG. The span at 373 to 391 shows a compositional bias: basic and acidic residues; sequence IGEKKSLMDKIKDKLPGQH.

It belongs to the plant dehydrin family.

In terms of biological role, may reduce intracellular freezing damage during winter by hydrogen-bonding to the lattice of the nascent ice crystals, thus modifying the structure and/or propagation of ice crystals. In Triticum aestivum (Wheat), this protein is Cold-shock protein CS120 (CS120).